The primary structure comprises 569 residues: Toxin YxiD (569 aa).

In terms of domain architecture, LXG spans 1–235; that stretch reads MKTLDVHALH…NPQMKQADDS (235 aa). Residues 8-91 are a coiled coil; it reads ALHEGIQHTI…QHAISSVESN (84 aa). Residues 548-569 form a disordered region; that stretch reads HQAGIHGTGSPANELFKGGKKK.

The protein in the N-terminal section; belongs to the LXG family. Probably interacts with cognate immunity protein YxxD but not with non-cognate immunity proteins. The interaction inhibits the toxic activity of YxxD.

The protein localises to the secreted. In terms of biological role, toxic component of one of 6 LXG toxin-immunity modules in this strain. They promote kin selection, mediate competition in biofilms, and drive spatial segregation of different strains, indicating that LXG toxins may help avoid warfare between strains in biofilms. Mediates intercellular competition during biofilm formation; disruption of the operon disadvantages the bacteria, but overexpression of the cognate immunity protein restores growth in competition with wild-type. Overexpression alone in situ causes growth arrest but not cell lysis, a large decrease in chromosomal DNA content and the production of anucleate cells. No effect is seen on rRNA. Co-overexpression with cognate immunity protein YxxD does not cause growth arrest. The toxic effect is not dependent on the epsA and tapA operons which are required for biofilm formation. The protein is Toxin YxiD (yxiD) of Bacillus subtilis (strain 168).